A 721-amino-acid polypeptide reads, in one-letter code: Pentatricopeptide repeat-containing protein At3g49710 (721 aa).

14 PPR repeats span residues Ser42–Pro72, Asn73–Pro103, Asp104–Val138, Asp139–Phe169, Tyr172–Leu202, Asp204–Ile238, Asp239–Gln273, Asn274–Pro307, Asp308–Pro343, Asp344–Ser378, Arg380–Leu410, Asn411–Pro445, Asn446–Thr476, and Glu482–Lys512. The tract at residues Ala517–Lys592 is type E motif. The interval Lys593–Lys623 is type E(+) motif. Positions Lys624–Trp721 are type DYW motif.

Belongs to the PPR family. PCMP-H subfamily.

The chain is Pentatricopeptide repeat-containing protein At3g49710 (PCMP-H79) from Arabidopsis thaliana (Mouse-ear cress).